Reading from the N-terminus, the 765-residue chain is Kinesin-like protein KIN-14S (765 aa).

A Kinesin motor domain is found at 132-456 (NIRVFCRCRP…LNFASRVRGI (325 aa)). 215–222 (GQTGTGKT) contacts ATP. The stretch at 469–534 (ELLKSKQMAE…ERKTRIKQES (66 aa)) forms a coiled coil. Disordered stretches follow at residues 581 to 613 (MPQQQPSQGHSKRFSDTTFKENNNSNRRSSSMD) and 654 to 678 (LRPEPSSLSSMETPSRPPPSFRGDP). Low complexity predominate over residues 602 to 611 (NNNSNRRSSS).

The protein belongs to the TRAFAC class myosin-kinesin ATPase superfamily. Kinesin family. KIN-14 subfamily.

This is Kinesin-like protein KIN-14S from Arabidopsis thaliana (Mouse-ear cress).